We begin with the raw amino-acid sequence, 142 residues long: Transcriptional regulator MraZ (142 aa).

SpoVT-AbrB domains are found at residues 5-51 (ASSL…PRPE) and 77-120 (AMDV…DKAS).

The protein belongs to the MraZ family. Forms oligomers.

Its subcellular location is the cytoplasm. The protein localises to the nucleoid. In Verminephrobacter eiseniae (strain EF01-2), this protein is Transcriptional regulator MraZ.